The following is a 234-amino-acid chain: Small ribosomal subunit protein eS4 (234 aa).

The 63-residue stretch at 37–99 (VPLLIVLRDV…REEYYRVFPG (63 aa)) folds into the S4 RNA-binding domain.

Belongs to the eukaryotic ribosomal protein eS4 family.

This is Small ribosomal subunit protein eS4 (rps4e) from Haloarcula marismortui (strain ATCC 43049 / DSM 3752 / JCM 8966 / VKM B-1809) (Halobacterium marismortui).